The following is a 198-amino-acid chain: Large ribosomal subunit protein bL9 (198 aa).

A compositionally biased stretch (basic and acidic residues) spans 156 to 166; that stretch reads RGEDISTRQED. The segment at 156-198 is disordered; it reads RGEDISTRQEDQDAAAEALAAAGEFFDPEAHNDGEQEEEAGDK.

This sequence belongs to the bacterial ribosomal protein bL9 family.

Binds to the 23S rRNA. This is Large ribosomal subunit protein bL9 from Rhodopseudomonas palustris (strain BisB18).